A 648-amino-acid polypeptide reads, in one-letter code: MISLNSSFLERSSVTGGSRTQSQSLRLSARRPVVTSMLNSNSLPERNVSVSVDSAVRDVNAPVAVEVDRSVGEKPFAAVGGGVEDMYGEDTATEDHYITPWSVSVASGYSLLRDPHHNKGLAFTEKERDAHFLRGLLPPVVVNHDLQVKKMMHNIRQYQVPLQRYQAMMDLQQRNERLFYKLLIENVEELLPIVYTPTVGEACQKYGSIFENSQGLFISLKDKGRILEILKNWPHKKIQVIVVTDGERILGLGDLGCQGMGIPVGKLALYTALGGVRPSACLPITIDVGTNNEKLLNDDEFYIGLKQKRAAGQEYAELMNEFMSAVKQNYGENLLIQFEDFANHNAFDLLEKYRTTHLVFNDDIQGTASVVLGGLISALKLVGGSLADQKFLFLGAGEAGTGIAELIALEISKQTNIPLEESRKKVWLVDSKGLIVRSRLDSLQHFKKPWAHDHEPVNEFLDAIKTIRPTVLIGSSGTGQTFTKEVVETMSSLNEKPIILALSNPTSQSECTAEQAYTWSEGRAIFASGSPFKPVEYNGKLYVSGQANNAYIFPGFGLGLIISGAIRVHDDMLLAASEAPAEQVTQEHFDKGLIFPPFTSIRKISAHIAAKVAAKAYELGLASRLPQPENLVAYAESCMYSPKYRIYR.

A chloroplast-targeting transit peptide spans 1 to 61 (MISLNSSFLE…VDSAVRDVNA (61 aa)). The active-site Proton donor is Tyr-195. Arg-248 contributes to the NAD(+) binding site. The active-site Proton acceptor is the Lys-266. Residues Glu-339, Asp-340, and Asp-363 each contribute to the a divalent metal cation site. Residue Asp-363 participates in NAD(+) binding. 392–408 (LFLGAGEAGTGIAELIA) provides a ligand contact to NADP(+). Asn-504 provides a ligand contact to NAD(+).

The protein belongs to the malic enzymes family. As to quaternary structure, homotetramer. The cofactor is Mg(2+). It depends on Mn(2+) as a cofactor.

It is found in the plastid. It localises to the chloroplast. The enzyme catalyses (S)-malate + NADP(+) = pyruvate + CO2 + NADPH. The catalysed reaction is oxaloacetate + H(+) = pyruvate + CO2. It participates in photosynthesis; C4 acid pathway. Functionally, the chloroplastic ME isoform decarboxylates malate shuttled from neighboring mesophyll cells. The CO(2) released is then refixed by ribulose-bisphosphate carboxylase. This pathway eliminates the photorespiratory loss of CO(2) that occurs in most plants. The polypeptide is NADP-dependent malic enzyme, chloroplastic (MOD1) (Flaveria trinervia (Clustered yellowtops)).